The chain runs to 1048 residues: Anguibactin system regulator (1048 aa).

A Carrier domain is found at 965–1039; the sequence is PIITASEDRV…AFAIIMDRCR (75 aa).

The protein belongs to the ATP-dependent AMP-binding enzyme family.

The protein operates within siderophore biosynthesis; anguibactin biosynthesis. Functionally, bifunctional protein that plays an essential role in virulence. Plays a role in both production of the siderophore anguibactin and regulation of iron transport genes. The protein is Anguibactin system regulator (angR) of Vibrio anguillarum (strain ATCC 68554 / 775) (Listonella anguillarum).